The primary structure comprises 401 residues: Phosphoglycerate kinase (401 aa).

Substrate-binding positions include 24–26, Arg-40, 63–66, Arg-122, and Arg-155; these read DFN and HFGR. Residues Lys-206, Gly-297, Glu-328, and 357-360 contribute to the ATP site; that span reads GGDS.

Belongs to the phosphoglycerate kinase family. In terms of assembly, monomer.

Its subcellular location is the cytoplasm. The catalysed reaction is (2R)-3-phosphoglycerate + ATP = (2R)-3-phospho-glyceroyl phosphate + ADP. It participates in carbohydrate degradation; glycolysis; pyruvate from D-glyceraldehyde 3-phosphate: step 2/5. This chain is Phosphoglycerate kinase, found in Gloeothece citriformis (strain PCC 7424) (Cyanothece sp. (strain PCC 7424)).